We begin with the raw amino-acid sequence, 444 residues long: Glutamyl-tRNA reductase (444 aa).

Substrate contacts are provided by residues 49–52, serine 109, 114–116, and glutamine 120; these read TCNR and ETQ. The active-site Nucleophile is the cysteine 50. 189–194 is an NADP(+) binding site; that stretch reads GAGKMG.

The protein belongs to the glutamyl-tRNA reductase family. As to quaternary structure, homodimer.

The enzyme catalyses (S)-4-amino-5-oxopentanoate + tRNA(Glu) + NADP(+) = L-glutamyl-tRNA(Glu) + NADPH + H(+). The protein operates within porphyrin-containing compound metabolism; protoporphyrin-IX biosynthesis; 5-aminolevulinate from L-glutamyl-tRNA(Glu): step 1/2. In terms of biological role, catalyzes the NADPH-dependent reduction of glutamyl-tRNA(Glu) to glutamate 1-semialdehyde (GSA). The polypeptide is Glutamyl-tRNA reductase (Bacillus cereus (strain AH187)).